Reading from the N-terminus, the 421-residue chain is Ribulose bisphosphate carboxylase large chain (421 aa).

Substrate-binding residues include Asn-68 and Thr-118. The active-site Proton acceptor is the Lys-120. Position 122 (Lys-122) interacts with substrate. Residues Lys-146, Asp-148, and Glu-149 each contribute to the Mg(2+) site. Position 146 is an N6-carboxylysine (Lys-146). His-239 serves as the catalytic Proton acceptor. Positions 240, 272, and 324 each coordinate substrate.

This sequence belongs to the RuBisCO large chain family. Type I subfamily. Heterohexadecamer of 8 large chains and 8 small chains; disulfide-linked. The disulfide link is formed within the large subunit homodimers. The cofactor is Mg(2+). The disulfide bond which can form in the large chain dimeric partners within the hexadecamer appears to be associated with oxidative stress and protein turnover.

The protein resides in the plastid. Its subcellular location is the chloroplast. The catalysed reaction is 2 (2R)-3-phosphoglycerate + 2 H(+) = D-ribulose 1,5-bisphosphate + CO2 + H2O. It catalyses the reaction D-ribulose 1,5-bisphosphate + O2 = 2-phosphoglycolate + (2R)-3-phosphoglycerate + 2 H(+). Functionally, ruBisCO catalyzes two reactions: the carboxylation of D-ribulose 1,5-bisphosphate, the primary event in carbon dioxide fixation, as well as the oxidative fragmentation of the pentose substrate in the photorespiration process. Both reactions occur simultaneously and in competition at the same active site. This is Ribulose bisphosphate carboxylase large chain (rbcL) from Aegilops tauschii (Tausch's goatgrass).